The primary structure comprises 471 residues: Alpha-galactosidase 1 (471 aa).

Positions 1–18 are cleaved as a signal peptide; that stretch reads MFAFYFLTACISLKGVFG. An intrachain disulfide couples Cys-42 to Cys-74. Asp-72 and Asp-73 together coordinate substrate. Asn-105 carries an N-linked (GlcNAc...) asparagine glycan. Cys-121 and Cys-151 are joined by a disulfide. Lys-147 serves as a coordination point for substrate. Catalysis depends on Asp-149, which acts as the Nucleophile. Residue Asn-175 is glycosylated (N-linked (GlcNAc...) asparagine). Arg-205 contributes to the substrate binding site. The active-site Proton donor is Asp-209. Disulfide bonds link Cys-221-Cys-237 and Cys-223-Cys-230. Substrate is bound at residue Gln-251. 7 N-linked (GlcNAc...) asparagine glycosylation sites follow: Asn-270, Asn-370, Asn-403, Asn-413, Asn-422, Asn-435, and Asn-454.

It belongs to the glycosyl hydrolase 27 family. In terms of assembly, homotetramer.

The protein localises to the secreted. It catalyses the reaction Hydrolysis of terminal, non-reducing alpha-D-galactose residues in alpha-D-galactosides, including galactose oligosaccharides, galactomannans and galactolipids.. This chain is Alpha-galactosidase 1 (MEL1), found in Saccharomyces cerevisiae (Baker's yeast).